The following is a 179-amino-acid chain: Inosine/xanthosine triphosphatase (179 aa).

Thr-8–Lys-13 contributes to the substrate binding site. Mg(2+) is bound by residues Asp-38 and Glu-68. Glu-68–Ala-69 contacts substrate.

The protein belongs to the YjjX NTPase family. In terms of assembly, homodimer. Requires Mg(2+) as cofactor. The cofactor is Mn(2+).

The enzyme catalyses XTP + H2O = XDP + phosphate + H(+). It carries out the reaction ITP + H2O = IDP + phosphate + H(+). In terms of biological role, phosphatase that hydrolyzes non-canonical purine nucleotides such as XTP and ITP to their respective diphosphate derivatives. Probably excludes non-canonical purines from DNA/RNA precursor pool, thus preventing their incorporation into DNA/RNA and avoiding chromosomal lesions. The chain is Inosine/xanthosine triphosphatase from Pectobacterium carotovorum subsp. carotovorum (strain PC1).